Here is a 429-residue protein sequence, read N- to C-terminus: Glutamate-1-semialdehyde 2,1-aminomutase (429 aa).

Lysine 265 is subject to N6-(pyridoxal phosphate)lysine.

Belongs to the class-III pyridoxal-phosphate-dependent aminotransferase family. HemL subfamily. In terms of assembly, homodimer. Pyridoxal 5'-phosphate serves as cofactor.

The protein resides in the cytoplasm. It carries out the reaction (S)-4-amino-5-oxopentanoate = 5-aminolevulinate. The protein operates within porphyrin-containing compound metabolism; protoporphyrin-IX biosynthesis; 5-aminolevulinate from L-glutamyl-tRNA(Glu): step 2/2. This chain is Glutamate-1-semialdehyde 2,1-aminomutase, found in Chromohalobacter salexigens (strain ATCC BAA-138 / DSM 3043 / CIP 106854 / NCIMB 13768 / 1H11).